The primary structure comprises 148 residues: SsrA-binding protein (148 aa).

The tract at residues 128–148 (ESIAKKDQERNLKREFKNNNR) is disordered.

It belongs to the SmpB family.

It localises to the cytoplasm. Its function is as follows. Required for rescue of stalled ribosomes mediated by trans-translation. Binds to transfer-messenger RNA (tmRNA), required for stable association of tmRNA with ribosomes. tmRNA and SmpB together mimic tRNA shape, replacing the anticodon stem-loop with SmpB. tmRNA is encoded by the ssrA gene; the 2 termini fold to resemble tRNA(Ala) and it encodes a 'tag peptide', a short internal open reading frame. During trans-translation Ala-aminoacylated tmRNA acts like a tRNA, entering the A-site of stalled ribosomes, displacing the stalled mRNA. The ribosome then switches to translate the ORF on the tmRNA; the nascent peptide is terminated with the 'tag peptide' encoded by the tmRNA and targeted for degradation. The ribosome is freed to recommence translation, which seems to be the essential function of trans-translation. In Fusobacterium nucleatum subsp. nucleatum (strain ATCC 25586 / DSM 15643 / BCRC 10681 / CIP 101130 / JCM 8532 / KCTC 2640 / LMG 13131 / VPI 4355), this protein is SsrA-binding protein.